A 66-amino-acid polypeptide reads, in one-letter code: Protein translocase subunit SecE (66 aa).

A helical membrane pass occupies residues 29-49 (LVASTLVVVVAVFIFSLICLV).

The protein belongs to the SecE/SEC61-gamma family. In terms of assembly, component of the Sec protein translocase complex. Heterotrimer consisting of SecY, SecE and SecG subunits. The heterotrimers can form oligomers, although 1 heterotrimer is thought to be able to translocate proteins. Interacts with the ribosome. Interacts with SecDF, and other proteins may be involved. Interacts with SecA.

The protein localises to the cell inner membrane. Functionally, essential subunit of the Sec protein translocation channel SecYEG. Clamps together the 2 halves of SecY. May contact the channel plug during translocation. The sequence is that of Protein translocase subunit SecE from Rickettsia felis (strain ATCC VR-1525 / URRWXCal2) (Rickettsia azadi).